We begin with the raw amino-acid sequence, 348 residues long: MVRTINETFLKACRGERTDYVPAWYMRQAGRSQPEYRKIKEKYSLFEITHNPELCAYVTKLPVDQYNVDAAILYKDIMSPLPAIGVDVEIKSGIGPVIDNPIRSLQDVEKLGEINPEDDVPYILDTIRLLTTEMLDVPLIGFSGAPFTLASYMIEGGPSRNYHNTKAFMYAEPKAWFALMDKLADMVITYLKAQINAGAKAVQIFDSWVGTVNVADYRVFIKPAMERIFAEVRPMGVPMIMHGVGAAHLVNEWHDLPLDVVGLDWRLPIEEARARGVHKAVQGNMDPSFLLAPWSVIEEHVKGILDQGMKEPGYIFNLGHGVFPEVNPDTLKRLTTFIHEYSKGQLAK.

Residues Arg-27 to Arg-31, Phe-46, Asp-76, Tyr-152, Ser-207, and His-320 each bind substrate.

The protein belongs to the uroporphyrinogen decarboxylase family. As to quaternary structure, homodimer.

The protein localises to the cytoplasm. The catalysed reaction is uroporphyrinogen III + 4 H(+) = coproporphyrinogen III + 4 CO2. The protein operates within porphyrin-containing compound metabolism; protoporphyrin-IX biosynthesis; coproporphyrinogen-III from 5-aminolevulinate: step 4/4. Its function is as follows. Catalyzes the decarboxylation of four acetate groups of uroporphyrinogen-III to yield coproporphyrinogen-III. This is Uroporphyrinogen decarboxylase from Bacillus cereus (strain G9842).